A 345-amino-acid chain; its full sequence is Fe-S cluster assembly protein DRE2 (345 aa).

Residues 11-166 (FSHSSNGVVL…SIGSSSGSSS (156 aa)) are N-terminal SAM-like domain. The segment at 147 to 166 (SKPATASSSFSIGSSSGSSS) is disordered. The segment covering 153 to 166 (SSSFSIGSSSGSSS) has biased composition (low complexity). Residues 167–210 (ALPLRRKLGSGASANAKKSLWATQPASANDLIDEASLLRDADFV) are linker. Residues Cys220, Cys233, Cys236, and Cys238 each coordinate [2Fe-2S] cluster. Residues 220–238 (CDVGAGQGKKKKACKGCTC) form a fe-S binding site A region. [4Fe-4S] cluster contacts are provided by Cys307, Cys310, Cys318, and Cys321. Short sequence motifs (cx2C motif) lie at residues 307 to 310 (CGSC) and 318 to 321 (CSSC). The fe-S binding site B stretch occupies residues 307-321 (CGSCFLGDAFRCSSC).

The protein belongs to the anamorsin family. Monomer. Interacts with TAH18. Interacts with MIA40. The cofactor is [2Fe-2S] cluster. Requires [4Fe-4S] cluster as cofactor.

Its subcellular location is the cytoplasm. It is found in the mitochondrion intermembrane space. Its function is as follows. Component of the cytosolic iron-sulfur (Fe-S) protein assembly (CIA) machinery required for the maturation of extramitochondrial Fe-S proteins. Part of an electron transfer chain functioning in an early step of cytosolic Fe-S biogenesis, facilitating the de novo assembly of a [4Fe-4S] cluster on the scaffold complex CFD1-NBP35. Electrons are transferred to DRE2 from NADPH via the FAD- and FMN-containing protein TAH18. TAH18-DRE2 are also required for the assembly of the diferric tyrosyl radical cofactor of ribonucleotide reductase (RNR), probably by providing electrons for reduction during radical cofactor maturation in the catalytic small subunit RNR2. The sequence is that of Fe-S cluster assembly protein DRE2 from Mycosarcoma maydis (Corn smut fungus).